Here is an 858-residue protein sequence, read N- to C-terminus: DNA mismatch repair protein MutS (858 aa).

Position 600–607 (600–607) interacts with ATP; that stretch reads GPNMSGKS. A disordered region spans residues 803–823; the sequence is EAASDEVDDNNSENSPMTDAE.

Belongs to the DNA mismatch repair MutS family.

Its function is as follows. This protein is involved in the repair of mismatches in DNA. It is possible that it carries out the mismatch recognition step. This protein has a weak ATPase activity. This Lactobacillus helveticus (strain DPC 4571) protein is DNA mismatch repair protein MutS.